The chain runs to 961 residues: E4 ubiquitin-protein ligase UFD2 (961 aa).

In terms of domain architecture, U-box spans 880 to 954; sequence DVPDEFLDPL…LCFKKQKKEE (75 aa).

This sequence belongs to the ubiquitin conjugation factor E4 family. Interacts with CDC48. Interacts with the ubiquitin-like domain of RAD23 and DSK2. Interacts with PEX29.

It is found in the cytoplasm. Its subcellular location is the nucleus. It catalyses the reaction S-ubiquitinyl-[E2 ubiquitin-conjugating enzyme]-L-cysteine + [acceptor protein]-L-lysine = [E2 ubiquitin-conjugating enzyme]-L-cysteine + N(6)-ubiquitinyl-[acceptor protein]-L-lysine.. The protein operates within protein modification; protein ubiquitination. E4 ubiquitin chain-elongation enzyme specifically involved in polyubiquitin chain assembly. Binds to CDC48 and elongates mono- and diubiquitinated ERAD substrates presented by the UFD1-NPL4-CDC48/p97 (UNC) AAA ATPase complex to a chain length of 4 to 6 ubiquitin moieties. Delivers these polyubiquitinated substrates to RAD23 and DSK2, which target them to the proteasome. Has E3 ubiquitin-protein ligase activity, accepting ubiquitin from its cognate E2 ubiquitin-conjugating enzyme UBC4. Enhances ubiquitination at 'Lys-48', but not at 'Lys-29' of the Ub moiety. Promotes ubiquitin chain elongation at 'Lys-48' on the DOA10 substrate PEX29. Also involved in the proteolytic processing of the ER-bound transcription factor SPT23. In Saccharomyces cerevisiae (strain ATCC 204508 / S288c) (Baker's yeast), this protein is E4 ubiquitin-protein ligase UFD2 (UFD2).